The chain runs to 104 residues: MKRIVSGDQVKVISGNEAGKVGVVRKVLYSSVGRRKEVYVIVSDVNVRRFVKKTQAGKKFDAKSYPIAVSNVALLAGDGFVSKVGFKLKDGTKKRIFKRTAEFV.

Belongs to the universal ribosomal protein uL24 family. Part of the 50S ribosomal subunit.

Its function is as follows. One of two assembly initiator proteins, it binds directly to the 5'-end of the 23S rRNA, where it nucleates assembly of the 50S subunit. In terms of biological role, one of the proteins that surrounds the polypeptide exit tunnel on the outside of the subunit. The sequence is that of Large ribosomal subunit protein uL24 from Neorickettsia sennetsu (strain ATCC VR-367 / Miyayama) (Ehrlichia sennetsu).